The following is a 585-amino-acid chain: Folylpolyglutamate synthase, mitochondrial (585 aa).

Residues 1–39 (MSRARCHALFLAAVSPRGATTRVAVRRGLSAWPVLQEPD) constitute a mitochondrion transit peptide. 103–106 (GKGS) contributes to the ATP binding site. Residues S127, E198, and H226 each coordinate Mg(2+). ATP contacts are provided by R361 and D375. The disordered stretch occupies residues 477–497 (EEQVSPDPWSTPGQEQDGPAS). Phosphoserine is present on S537.

It belongs to the folylpolyglutamate synthase family. Monomer. A monovalent cation is required as a cofactor.

It is found in the mitochondrion inner membrane. Its subcellular location is the mitochondrion matrix. The protein resides in the cytoplasm. It carries out the reaction (6S)-5,6,7,8-tetrahydrofolyl-(gamma-L-Glu)(n) + L-glutamate + ATP = (6S)-5,6,7,8-tetrahydrofolyl-(gamma-L-Glu)(n+1) + ADP + phosphate + H(+). It functions in the pathway cofactor biosynthesis; tetrahydrofolylpolyglutamate biosynthesis. Catalyzes conversion of folates to polyglutamate derivatives allowing concentration of folate compounds in the cell and the intracellular retention of these cofactors, which are important substrates for most of the folate-dependent enzymes that are involved in one-carbon transfer reactions involved in purine, pyrimidine and amino acid synthesis. The sequence is that of Folylpolyglutamate synthase, mitochondrial (FPGS) from Bos taurus (Bovine).